The sequence spans 183 residues: Heavy metal-associated isoprenylated plant protein 44 (183 aa).

The region spanning 50 to 113 is the HMA domain; that stretch reads LQTVELKVRM…AVRRAGKRAE (64 aa). Positions 61 and 64 each coordinate a metal cation. Cys180 carries the post-translational modification Cysteine methyl ester. The S-farnesyl cysteine moiety is linked to residue Cys180. Positions 181–183 are cleaved as a propeptide — removed in mature form; that stretch reads RLM.

This sequence belongs to the HIPP family.

Heavy-metal-binding protein. This is Heavy metal-associated isoprenylated plant protein 44 from Arabidopsis thaliana (Mouse-ear cress).